Reading from the N-terminus, the 420-residue chain is Serine--tRNA ligase (420 aa).

L-serine is bound at residue 227–229 (TSE). ATP contacts are provided by residues 258 to 260 (RRE) and valine 274. An L-serine-binding site is contributed by glutamate 281. 345–348 (EVTS) serves as a coordination point for ATP. Threonine 379 is an L-serine binding site.

Belongs to the class-II aminoacyl-tRNA synthetase family. Type-1 seryl-tRNA synthetase subfamily. As to quaternary structure, homodimer. The tRNA molecule binds across the dimer.

It is found in the cytoplasm. It carries out the reaction tRNA(Ser) + L-serine + ATP = L-seryl-tRNA(Ser) + AMP + diphosphate + H(+). The enzyme catalyses tRNA(Sec) + L-serine + ATP = L-seryl-tRNA(Sec) + AMP + diphosphate + H(+). It functions in the pathway aminoacyl-tRNA biosynthesis; selenocysteinyl-tRNA(Sec) biosynthesis; L-seryl-tRNA(Sec) from L-serine and tRNA(Sec): step 1/1. Its function is as follows. Catalyzes the attachment of serine to tRNA(Ser). Is also able to aminoacylate tRNA(Sec) with serine, to form the misacylated tRNA L-seryl-tRNA(Sec), which will be further converted into selenocysteinyl-tRNA(Sec). The sequence is that of Serine--tRNA ligase from Acidothermus cellulolyticus (strain ATCC 43068 / DSM 8971 / 11B).